The sequence spans 394 residues: Elongation factor Tu 1 (394 aa).

One can recognise a tr-type G domain in the interval 10 to 204 (KPHVNVGTIG…ALDTYIPEPE (195 aa)). The G1 stretch occupies residues 19–26 (GHVDHGKT). Residue 19–26 (GHVDHGKT) participates in GTP binding. Threonine 26 lines the Mg(2+) pocket. The tract at residues 60-64 (GITIS) is G2. Positions 81-84 (DCPG) are G3. Residues 81–85 (DCPGH) and 136–139 (NKCD) each bind GTP. The segment at 136–139 (NKCD) is G4. Positions 174–176 (SAL) are G5.

Belongs to the TRAFAC class translation factor GTPase superfamily. Classic translation factor GTPase family. EF-Tu/EF-1A subfamily. Monomer.

It is found in the cytoplasm. The enzyme catalyses GTP + H2O = GDP + phosphate + H(+). In terms of biological role, GTP hydrolase that promotes the GTP-dependent binding of aminoacyl-tRNA to the A-site of ribosomes during protein biosynthesis. This Vibrio vulnificus (strain CMCP6) protein is Elongation factor Tu 1.